A 418-amino-acid polypeptide reads, in one-letter code: MLHPRARTMLLLSLPAVAIGIASSLILIMVMKIASVLQNLLWQRLPGTLGIAQDSPLWIIGVLTLTGIAVGLVIRFSQGHAGPDPACEPLIGAPVPPSALPGLIVALILGLAGGVSLGPEHPIMTVNIALAVAIGARLLPRVNRMEWTILASAGTIGALFGTPVAAALIFSQTLNGSNEVPLWDRLFAPLMAAAAGALTTGLFFHPHFSLPIAHYGQMEMTDILSGAIVAAIAIAAGMVAVWCLPRLHAMMHQMKNPVFVLGIGGLILGILGVIGGPVSLFKGLDEMQQMVANQAFSTSDYFLLAVIKLAALVVAAASGFRGGRIFPAVFVGVALGLMLHEHVPAVPAAITVSCAILGIVLVVTRDGWLSLFMAAVVVPNTTLLPLLCIVMLPAWLLLAGKPMMMVNRQKQQPPHDNV.

The next 12 helical transmembrane spans lie at 10–30 (LLLSLPAVAIGIASSLILIMV), 54–74 (DSPLWIIGVLTLTGIAVGLVI), 99–119 (ALPGLIVALILGLAGGVSLGP), 120–140 (EHPIMTVNIALAVAIGARLLP), 149–169 (ILASAGTIGALFGTPVAAALI), 186–206 (LFAPLMAAAAGALTTGLFFHP), 223–243 (ILSGAIVAAIAIAAGMVAVWC), 258–278 (VFVLGIGGLILGILGVIGGPV), 300–320 (DYFLLAVIKLAALVVAAASGF), 322–342 (GGRIFPAVFVGVALGLMLHEH), 343–363 (VPAVPAAITVSCAILGIVLVV), and 371–391 (LFMAAVVVPNTTLLPLLCIVM).

This sequence belongs to the chloride channel (TC 2.A.49) family.

Its subcellular location is the cell membrane. The polypeptide is Putative ion-transport protein YfeO (Escherichia coli O45:K1 (strain S88 / ExPEC)).